Consider the following 159-residue polypeptide: GDP-mannose mannosyl hydrolase (159 aa).

Substrate-binding positions include 2 to 3 (FL), Phe8, and Arg36. The region spanning 13 to 153 (RSTPLVSLDF…SRAYFLAEKR (141 aa)) is the Nudix hydrolase domain. Mg(2+) is bound by residues Gly49, Glu69, and Gln122. The Nudix box signature appears at 50–71 (GRVQKDETLEAAFERLTMAELG).

This sequence belongs to the Nudix hydrolase family. Homodimer. Mg(2+) serves as cofactor.

It catalyses the reaction GDP-alpha-D-mannose + H2O = D-mannose + GDP + H(+). Functionally, hydrolyzes GDP-mannose. This Escherichia coli O157:H7 protein is GDP-mannose mannosyl hydrolase.